Reading from the N-terminus, the 128-residue chain is Adrenodoxin homolog (128 aa).

The region spanning 12-115 (EQIRIFFKTM…NAVFTVPRAT (104 aa)) is the 2Fe-2S ferredoxin-type domain. Positions 50, 56, 59, and 96 each coordinate [2Fe-2S] cluster.

This sequence belongs to the adrenodoxin/putidaredoxin family. It depends on [2Fe-2S] cluster as a cofactor.

It localises to the mitosome. Ferredoxins are iron-sulfur proteins that transfer electrons in a wide variety of metabolic reactions. The protein is Adrenodoxin homolog of Encephalitozoon cuniculi (strain GB-M1) (Microsporidian parasite).